Here is a 458-residue protein sequence, read N- to C-terminus: Bifunctional protein GlmU (458 aa).

The pyrophosphorylase stretch occupies residues 1-224 (MTVIALAAGK…PKVAVGVNNQ (224 aa)). Residues 6 to 9 (LAAG), lysine 20, glutamine 71, and 76 to 77 (GT) contribute to the UDP-N-acetyl-alpha-D-glucosamine site. Residue aspartate 99 coordinates Mg(2+). UDP-N-acetyl-alpha-D-glucosamine-binding residues include glycine 136, glutamate 150, asparagine 165, and asparagine 222. Asparagine 222 provides a ligand contact to Mg(2+). The linker stretch occupies residues 225–245 (LELARATRLLFKRKALRLMED). The N-acetyltransferase stretch occupies residues 246–458 (GVLMIDPRTV…TAETEEKEQV (213 aa)). 2 residues coordinate UDP-N-acetyl-alpha-D-glucosamine: arginine 328 and lysine 346. The active-site Proton acceptor is the histidine 358. UDP-N-acetyl-alpha-D-glucosamine-binding residues include tyrosine 361 and asparagine 372. Acetyl-CoA contacts are provided by residues 381 to 382 (NY), serine 401, serine 419, and arginine 436.

The protein in the N-terminal section; belongs to the N-acetylglucosamine-1-phosphate uridyltransferase family. In the C-terminal section; belongs to the transferase hexapeptide repeat family. As to quaternary structure, homotrimer. It depends on Mg(2+) as a cofactor.

The protein resides in the cytoplasm. It catalyses the reaction alpha-D-glucosamine 1-phosphate + acetyl-CoA = N-acetyl-alpha-D-glucosamine 1-phosphate + CoA + H(+). It carries out the reaction N-acetyl-alpha-D-glucosamine 1-phosphate + UTP + H(+) = UDP-N-acetyl-alpha-D-glucosamine + diphosphate. It functions in the pathway nucleotide-sugar biosynthesis; UDP-N-acetyl-alpha-D-glucosamine biosynthesis; N-acetyl-alpha-D-glucosamine 1-phosphate from alpha-D-glucosamine 6-phosphate (route II): step 2/2. The protein operates within nucleotide-sugar biosynthesis; UDP-N-acetyl-alpha-D-glucosamine biosynthesis; UDP-N-acetyl-alpha-D-glucosamine from N-acetyl-alpha-D-glucosamine 1-phosphate: step 1/1. It participates in bacterial outer membrane biogenesis; LPS lipid A biosynthesis. Its function is as follows. Catalyzes the last two sequential reactions in the de novo biosynthetic pathway for UDP-N-acetylglucosamine (UDP-GlcNAc). The C-terminal domain catalyzes the transfer of acetyl group from acetyl coenzyme A to glucosamine-1-phosphate (GlcN-1-P) to produce N-acetylglucosamine-1-phosphate (GlcNAc-1-P), which is converted into UDP-GlcNAc by the transfer of uridine 5-monophosphate (from uridine 5-triphosphate), a reaction catalyzed by the N-terminal domain. The sequence is that of Bifunctional protein GlmU from Bdellovibrio bacteriovorus (strain ATCC 15356 / DSM 50701 / NCIMB 9529 / HD100).